The primary structure comprises 219 residues: MDQLSMKKMAAQAALQYVKPDSIIGVGSGSTVNCFIEVLGTIKETIKGAVAASKASEELLLRQGIEVFSANDVSGLDIYVDGADEINPQKMMIKGGGAALTREKIVAALAKKFICIVDSSKQVDVLGSTFALPIEVIPMARSQVARKLVALGGSPEYRENVVTDNGNVILDVYNFKIMNPIEMEKELNNVAGVVTNGIFALRSADIVIVGTPEGTKIIE.

Substrate-binding positions include 28–31, 81–84, and 94–97; these read SGST, DGAD, and KGGG. Glu103 (proton acceptor) is an active-site residue. A substrate-binding site is contributed by Lys121.

This sequence belongs to the ribose 5-phosphate isomerase family. In terms of assembly, homodimer.

The catalysed reaction is aldehydo-D-ribose 5-phosphate = D-ribulose 5-phosphate. Its pathway is carbohydrate degradation; pentose phosphate pathway; D-ribose 5-phosphate from D-ribulose 5-phosphate (non-oxidative stage): step 1/1. In terms of biological role, catalyzes the reversible conversion of ribose-5-phosphate to ribulose 5-phosphate. This chain is Ribose-5-phosphate isomerase A, found in Histophilus somni (strain 129Pt) (Haemophilus somnus).